Here is a 1576-residue protein sequence, read N- to C-terminus: Pentafunctional AROM polypeptide (1576 aa).

Positions 1 to 387 are 3-dehydroquinate synthase; the sequence is MGSTTFENPT…YEPKASVVED (387 aa). Residues 49–51, 86–89, 117–119, and Asp122 each bind NAD(+); these read DTN, ENSK, and GGV. Residue Arg133 participates in 7-phospho-2-dehydro-3-deoxy-D-arabino-heptonate binding. Residue 142–143 participates in NAD(+) binding; that stretch reads TT. 7-phospho-2-dehydro-3-deoxy-D-arabino-heptonate is bound by residues Asp149 and Lys155. Lys164 contacts NAD(+). A 7-phospho-2-dehydro-3-deoxy-D-arabino-heptonate-binding site is contributed by Asn165. NAD(+)-binding positions include 182 to 185 and Asn193; that span reads FLET. Glu197 provides a ligand contact to Zn(2+). 7-phospho-2-dehydro-3-deoxy-D-arabino-heptonate is bound by residues 197–200 and Lys253; that span reads EVVK. Glu263 (proton acceptor; for 3-dehydroquinate synthase activity) is an active-site residue. Residues 267–271 and His274 each bind 7-phospho-2-dehydro-3-deoxy-D-arabino-heptonate; that span reads RNILN. His274 is a binding site for Zn(2+). His278 (proton acceptor; for 3-dehydroquinate synthase activity) is an active-site residue. The 7-phospho-2-dehydro-3-deoxy-D-arabino-heptonate site is built by His290 and Lys359. His290 contacts Zn(2+). The segment at 400 to 841 is EPSP synthase; that stretch reads VRPSVPETLN…WDILSKSFQV (442 aa). Cys823 functions as the For EPSP synthase activity in the catalytic mechanism. Residues 863 to 1055 form a shikimate kinase region; that stretch reads DKSIFIIGMR…RNKPQSFFVS (193 aa). 870 to 877 is an ATP binding site; sequence GMRGAGKT. Positions 1056 to 1276 are 3-dehydroquinase; the sequence is LTMPDISGAA…AAPGQLSAAE (221 aa). His1179 (proton acceptor; for 3-dehydroquinate dehydratase activity) is an active-site residue. The Schiff-base intermediate with substrate; for 3-dehydroquinate dehydratase activity role is filled by Lys1207. Positions 1289–1576 are shikimate dehydrogenase; sequence PKSFYLFGTP…RAAVMGDSTA (288 aa).

In the N-terminal section; belongs to the sugar phosphate cyclases superfamily. Dehydroquinate synthase family. The protein in the 2nd section; belongs to the EPSP synthase family. It in the 3rd section; belongs to the shikimate kinase family. This sequence in the 4th section; belongs to the type-I 3-dehydroquinase family. In the C-terminal section; belongs to the shikimate dehydrogenase family. In terms of assembly, homodimer. The cofactor is Zn(2+).

It localises to the cytoplasm. It catalyses the reaction 7-phospho-2-dehydro-3-deoxy-D-arabino-heptonate = 3-dehydroquinate + phosphate. The enzyme catalyses 3-dehydroquinate = 3-dehydroshikimate + H2O. It carries out the reaction shikimate + NADP(+) = 3-dehydroshikimate + NADPH + H(+). The catalysed reaction is shikimate + ATP = 3-phosphoshikimate + ADP + H(+). It catalyses the reaction 3-phosphoshikimate + phosphoenolpyruvate = 5-O-(1-carboxyvinyl)-3-phosphoshikimate + phosphate. Its pathway is metabolic intermediate biosynthesis; chorismate biosynthesis; chorismate from D-erythrose 4-phosphate and phosphoenolpyruvate: step 2/7. The protein operates within metabolic intermediate biosynthesis; chorismate biosynthesis; chorismate from D-erythrose 4-phosphate and phosphoenolpyruvate: step 3/7. It participates in metabolic intermediate biosynthesis; chorismate biosynthesis; chorismate from D-erythrose 4-phosphate and phosphoenolpyruvate: step 4/7. It functions in the pathway metabolic intermediate biosynthesis; chorismate biosynthesis; chorismate from D-erythrose 4-phosphate and phosphoenolpyruvate: step 5/7. Its pathway is metabolic intermediate biosynthesis; chorismate biosynthesis; chorismate from D-erythrose 4-phosphate and phosphoenolpyruvate: step 6/7. Its function is as follows. The AROM polypeptide catalyzes 5 consecutive enzymatic reactions in prechorismate polyaromatic amino acid biosynthesis. The polypeptide is Pentafunctional AROM polypeptide (Sclerotinia sclerotiorum (strain ATCC 18683 / 1980 / Ss-1) (White mold)).